A 925-amino-acid chain; its full sequence is Protein translocase subunit SecA (925 aa).

Residues glutamine 87, 105 to 109 (GEGKT), and aspartate 515 contribute to the ATP site. Residues cysteine 909, cysteine 911, cysteine 920, and histidine 921 each coordinate Zn(2+).

The protein belongs to the SecA family. In terms of assembly, monomer and homodimer. Part of the essential Sec protein translocation apparatus which comprises SecA, SecYEG and auxiliary proteins SecDF-YajC and YidC. Zn(2+) serves as cofactor.

The protein localises to the cell inner membrane. It localises to the cytoplasm. The catalysed reaction is ATP + H2O + cellular proteinSide 1 = ADP + phosphate + cellular proteinSide 2.. Part of the Sec protein translocase complex. Interacts with the SecYEG preprotein conducting channel. Has a central role in coupling the hydrolysis of ATP to the transfer of proteins into and across the cell membrane, serving both as a receptor for the preprotein-SecB complex and as an ATP-driven molecular motor driving the stepwise translocation of polypeptide chains across the membrane. This Cupriavidus necator (strain ATCC 17699 / DSM 428 / KCTC 22496 / NCIMB 10442 / H16 / Stanier 337) (Ralstonia eutropha) protein is Protein translocase subunit SecA.